We begin with the raw amino-acid sequence, 317 residues long: Transaldolase (317 aa).

Catalysis depends on K126, which acts as the Schiff-base intermediate with substrate.

This sequence belongs to the transaldolase family. Type 1 subfamily. As to quaternary structure, homodimer.

Its subcellular location is the cytoplasm. The catalysed reaction is D-sedoheptulose 7-phosphate + D-glyceraldehyde 3-phosphate = D-erythrose 4-phosphate + beta-D-fructose 6-phosphate. Its pathway is carbohydrate degradation; pentose phosphate pathway; D-glyceraldehyde 3-phosphate and beta-D-fructose 6-phosphate from D-ribose 5-phosphate and D-xylulose 5-phosphate (non-oxidative stage): step 2/3. Transaldolase is important for the balance of metabolites in the pentose-phosphate pathway. The protein is Transaldolase of Burkholderia mallei (strain SAVP1).